A 130-amino-acid polypeptide reads, in one-letter code: Small ribosomal subunit protein uS11 (130 aa).

This sequence belongs to the universal ribosomal protein uS11 family. In terms of assembly, part of the 30S ribosomal subunit. Interacts with proteins S7 and S18. Binds to IF-3.

Located on the platform of the 30S subunit, it bridges several disparate RNA helices of the 16S rRNA. Forms part of the Shine-Dalgarno cleft in the 70S ribosome. The chain is Small ribosomal subunit protein uS11 from Prochlorococcus marinus (strain MIT 9515).